We begin with the raw amino-acid sequence, 296 residues long: 4-hydroxybenzoate octaprenyltransferase (296 aa).

Helical transmembrane passes span 29–49 (AGWL…AGGF), 52–72 (WHLL…GCCI), 103–123 (LVLG…TNAI), 151–171 (VLGV…LGEV), 176–196 (WLLM…YAMV), 220–240 (VILL…MPYV), 243–263 (ALFT…YTLI), and 275–295 (FRLN…SYAL).

The protein belongs to the UbiA prenyltransferase family. It depends on Mg(2+) as a cofactor.

The protein resides in the cell inner membrane. It carries out the reaction all-trans-octaprenyl diphosphate + 4-hydroxybenzoate = 4-hydroxy-3-(all-trans-octaprenyl)benzoate + diphosphate. Its pathway is cofactor biosynthesis; ubiquinone biosynthesis. Its function is as follows. Catalyzes the prenylation of para-hydroxybenzoate (PHB) with an all-trans polyprenyl group. Mediates the second step in the final reaction sequence of ubiquinone-8 (UQ-8) biosynthesis, which is the condensation of the polyisoprenoid side chain with PHB, generating the first membrane-bound Q intermediate 3-octaprenyl-4-hydroxybenzoate. The sequence is that of 4-hydroxybenzoate octaprenyltransferase from Albidiferax ferrireducens (strain ATCC BAA-621 / DSM 15236 / T118) (Rhodoferax ferrireducens).